Reading from the N-terminus, the 657-residue chain is MSTNKSSIEKITLGSFLIALGVVYGDIGTSPLYVMKSIINGNGGLESITPDFILGVLSLIFWTMTLLTTIKYVLITLKADNKGEGGIFSLYTLIRRRAKWLIIPAMVGGSALLADGMLTPAVTVTSSIEGLKILPSFNDIFGNNQDIIIIIVLVILSFLFFIQHFGTEIIGKIFGPVMFIWFAFLAILGIVNLSGNLYLLKALSPHYAIKILFSPNNHLGFFILGGVFLSTTGAEALYSDLGHVGRKNIYLTWPLVKICLLLNYFGQAAWILSQKNNAKLYGIESLNPFFQMMPSWLLLFGVLISTLAAIIASQALISGSYTLVSEAIKLNLFPRLQCLYPSNSKGQIYMPAINRILWIACIAIVLYFRSSDNMEAAYGLSITVTMLMTSILLFNYLLKRKTPLPIALIILVFFSSLEFSFLISSAVKFEKGGFVSVLIALCILSIMYIWIKGHYIKMSLLDYIPIENYKNQLKELKNDVDRPKYATNLVYLTSSEKSKRIERKIMYSILDKRPKRADVYWFVNVIVTDEPYTSEYTVNTFGTDYMVKVQLKLGFRVNQKLNVFLRQIVCELINNGDIKVQNKKYTTLHNRNVGDFRFILINECLSSESKLESWNSIIIRSKLFIKKFTVSPAKWFGLESSEIEVENVPLILGSTRM.

The next 12 helical transmembrane spans lie at Ser15–Met35, Ile48–Thr68, Trp100–Pro120, Ile147–Thr167, Ile173–Leu193, Leu219–Ser239, Leu251–Ile271, Met292–Ala312, Ile348–Phe368, Tyr378–Leu398, Pro403–Ile423, and Lys431–Ile451.

Belongs to the HAK/KUP transporter (TC 2.A.72) family.

It localises to the cell membrane. It carries out the reaction K(+)(in) + H(+)(in) = K(+)(out) + H(+)(out). Transport of potassium into the cell. Likely operates as a K(+):H(+) symporter. This Clostridium perfringens (strain SM101 / Type A) protein is Probable potassium transport system protein Kup.